The sequence spans 523 residues: ATP synthase subunit alpha (523 aa).

An ATP-binding site is contributed by 179 to 186; sequence GDRQTGKT.

Belongs to the ATPase alpha/beta chains family. As to quaternary structure, F-type ATPases have 2 components, CF(1) - the catalytic core - and CF(0) - the membrane proton channel. CF(1) has five subunits: alpha(3), beta(3), gamma(1), delta(1), epsilon(1). CF(0) has three main subunits: a(1), b(2) and c(9-12). The alpha and beta chains form an alternating ring which encloses part of the gamma chain. CF(1) is attached to CF(0) by a central stalk formed by the gamma and epsilon chains, while a peripheral stalk is formed by the delta and b chains.

It is found in the cell inner membrane. The catalysed reaction is ATP + H2O + 4 H(+)(in) = ADP + phosphate + 5 H(+)(out). Its function is as follows. Produces ATP from ADP in the presence of a proton gradient across the membrane. The alpha chain is a regulatory subunit. The protein is ATP synthase subunit alpha of Vibrio parahaemolyticus serotype O3:K6 (strain RIMD 2210633).